The following is a 472-amino-acid chain: ATP-dependent rRNA helicase rrp3 (472 aa).

The disordered stretch occupies residues M1 to P51. The segment covering A10–D19 has biased composition (basic and acidic residues). Positions A20–V29 are enriched in polar residues. Residues K52–A80 carry the Q motif motif. The Helicase ATP-binding domain maps to I83–V254. A96–T103 is a binding site for ATP. A DEAD box motif is present at residues D202–D205. The Helicase C-terminal domain maps to Y282–M426. Residues G451–G472 are disordered. Residues T452–R462 are compositionally biased toward basic residues.

It belongs to the DEAD box helicase family. DDX47/RRP3 subfamily. Interacts with the SSU processome.

It localises to the nucleus. The catalysed reaction is ATP + H2O = ADP + phosphate + H(+). In terms of biological role, ATP-dependent rRNA helicase required for pre-ribosomal RNA processing. Involved in the maturation of the 35S-pre-rRNA and to its cleavage to mature 18S rRNA. The sequence is that of ATP-dependent rRNA helicase rrp3 from Neosartorya fischeri (strain ATCC 1020 / DSM 3700 / CBS 544.65 / FGSC A1164 / JCM 1740 / NRRL 181 / WB 181) (Aspergillus fischerianus).